We begin with the raw amino-acid sequence, 1041 residues long: Nuclear pore complex protein NUP98A (1041 aa).

Polar residues predominate over residues 1-34; that stretch reads MFGSSNPFGQSSGTSPFGSQSLFGQTSNTSSNNP. Positions 1 to 44 are disordered; that stretch reads MFGSSNPFGQSSGTSPFGSQSLFGQTSNTSSNNPFAPATPFGTS. 44 repeat units span residues 2–3, 8–9, 17–18, 23–24, 41–42, 56–57, 64–65, 79–80, 87–88, 94–95, 103–104, 109–110, 124–125, 135–136, 140–141, 146–147, 154–155, 162–163, 170–171, 178–179, 186–187, 194–195, 202–203, 210–211, 217–218, 222–223, 228–229, 236–237, 244–245, 252–253, 260–261, 268–269, 276–277, 284–285, 294–295, 300–301, 307–308, 312–313, 319–320, 329–330, 334–335, 339–340, 411–412, and 427–428. Residues 2-677 form a 65 X 2 AA repeats of F-G region; that stretch reads FGSSNPFGQS…QPVAVTNPFG (676 aa). Residues 98–171 are disordered; the sequence is PASSPFGGSS…FGATSTPSFG (74 aa). A compositionally biased stretch (polar residues) spans 117–171; it reads STPQSNPFGNSTQQSQPAFGNTSFGSSTPFGATNTPAFGAPSTPSFGATSTPSFG. Disordered regions lie at residues 315-347 and 392-447; these read TPSPFGGAQASTPTFGGSGFGQSTFGGQQGGSR and QRGD…TNPF. Positions 430 to 447 are enriched in low complexity; it reads TSANPTNPFSSSTSTNPF. 21 repeat units span residues 459-460, 466-467, 471-472, 480-481, 491-492, 497-498, 506-507, 514-515, 521-522, 533-534, 555-556, 562-563, 565-566, 573-574, 586-587, 604-605, 627-628, 632-633, 650-651, 655-656, and 676-677. The segment covering 517–526 has biased composition (low complexity); that stretch reads SSSIFGSAPG. Positions 517-560 are disordered; it reads SSSIFGSAPGQGATPAFGNSQPSTLFNSTPSTGQTGSAFGQTGS. Residues 533–560 show a composition bias toward polar residues; the sequence is FGNSQPSTLFNSTPSTGQTGSAFGQTGS. A disordered region spans residues 734–860; that stretch reads KYRPGENGPK…KERPYKTLSG (127 aa). Positions 782–793 are enriched in basic and acidic residues; the sequence is SRDKSILPKEQR. The segment covering 831-846 has biased composition (polar residues); the sequence is TSVNANQKPNGTTRSD. Residues 885–1027 form the Peptidase S59 domain; the sequence is QSDYFTEPRI…GEWKFRVEHF (143 aa).

The protein belongs to the nucleoporin GLFG family. As to quaternary structure, part of the nuclear pore complex (NPC). The NPC has an eight-fold symmetrical structure comprising a central transport channel and two rings, the cytoplasmic and nuclear rings, to which eight filaments are attached. The cytoplasmic filaments have loose ends, while the nuclear filaments are joined in a distal ring, forming a nuclear basket. NPCs are highly dynamic in configuration and composition, and can be devided in 3 subcomplexes, the NUP62 subcomplex, the NUP107-160 subcomplex and the NUP93 subcomplex, containing approximately 30 different nucleoporin proteins.

The protein resides in the nucleus. Its subcellular location is the nuclear pore complex. This is Nuclear pore complex protein NUP98A from Arabidopsis thaliana (Mouse-ear cress).